The following is a 159-amino-acid chain: 3-hydroxyacyl-[acyl-carrier-protein] dehydratase FabZ (159 aa).

Residue His58 is part of the active site.

The protein belongs to the thioester dehydratase family. FabZ subfamily.

It localises to the cytoplasm. The catalysed reaction is a (3R)-hydroxyacyl-[ACP] = a (2E)-enoyl-[ACP] + H2O. Involved in unsaturated fatty acids biosynthesis. Catalyzes the dehydration of short chain beta-hydroxyacyl-ACPs and long chain saturated and unsaturated beta-hydroxyacyl-ACPs. The sequence is that of 3-hydroxyacyl-[acyl-carrier-protein] dehydratase FabZ from Helicobacter pylori (strain P12).